We begin with the raw amino-acid sequence, 224 residues long: Phosphoglycolate phosphatase (224 aa).

Residue aspartate 11 is the Nucleophile of the active site. Mg(2+) contacts are provided by aspartate 11, aspartate 13, and aspartate 177.

The protein belongs to the HAD-like hydrolase superfamily. CbbY/CbbZ/Gph/YieH family. The cofactor is Mg(2+).

It carries out the reaction 2-phosphoglycolate + H2O = glycolate + phosphate. Its pathway is organic acid metabolism; glycolate biosynthesis; glycolate from 2-phosphoglycolate: step 1/1. Specifically catalyzes the dephosphorylation of 2-phosphoglycolate. Is involved in the dissimilation of the intracellular 2-phosphoglycolate formed during the DNA repair of 3'-phosphoglycolate ends, a major class of DNA lesions induced by oxidative stress. This chain is Phosphoglycolate phosphatase, found in Mannheimia succiniciproducens (strain KCTC 0769BP / MBEL55E).